The sequence spans 329 residues: DNA-directed RNA polymerase subunit alpha (329 aa).

Residues Met-1–Arg-235 are alpha N-terminal domain (alpha-NTD). The tract at residues Phe-249 to Asp-329 is alpha C-terminal domain (alpha-CTD).

It belongs to the RNA polymerase alpha chain family. In terms of assembly, homodimer. The RNAP catalytic core consists of 2 alpha, 1 beta, 1 beta' and 1 omega subunit. When a sigma factor is associated with the core the holoenzyme is formed, which can initiate transcription.

The catalysed reaction is RNA(n) + a ribonucleoside 5'-triphosphate = RNA(n+1) + diphosphate. Functionally, DNA-dependent RNA polymerase catalyzes the transcription of DNA into RNA using the four ribonucleoside triphosphates as substrates. The sequence is that of DNA-directed RNA polymerase subunit alpha from Buchnera aphidicola subsp. Cinara cedri (strain Cc).